A 488-amino-acid polypeptide reads, in one-letter code: Inosine-5'-monophosphate dehydrogenase (488 aa).

CBS domains are found at residues 95–153 and 157–216; these read VISN…SIKI and MTKE…AKDE. NAD(+) contacts are provided by residues D250 and 300-302; that span reads GIG. K(+) contacts are provided by G302 and G304. S305 lines the IMP pocket. Position 307 (C307) interacts with K(+). Residue C307 is the Thioimidate intermediate of the active site. Residues 340-342, 363-364, and 387-391 contribute to the IMP site; these read DGG, GS, and YRGMG. R403 acts as the Proton acceptor in catalysis. E417 contributes to the IMP binding site. Residues 467–488 form a disordered region; the sequence is AGLAESHPHDVQITKESPNYSF. K(+)-binding residues include E471, S472, and H473.

The protein belongs to the IMPDH/GMPR family. Homotetramer. The cofactor is K(+).

It catalyses the reaction IMP + NAD(+) + H2O = XMP + NADH + H(+). It participates in purine metabolism; XMP biosynthesis via de novo pathway; XMP from IMP: step 1/1. Mycophenolic acid (MPA) is a non-competitive inhibitor that prevents formation of the closed enzyme conformation by binding to the same site as the amobile flap. In contrast, mizoribine monophosphate (MZP) is a competitive inhibitor that induces the closed conformation. MPA is a potent inhibitor of mammalian IMPDHs but a poor inhibitor of the bacterial enzymes. MZP is a more potent inhibitor of bacterial IMPDH. Functionally, catalyzes the conversion of inosine 5'-phosphate (IMP) to xanthosine 5'-phosphate (XMP), the first committed and rate-limiting step in the de novo synthesis of guanine nucleotides, and therefore plays an important role in the regulation of cell growth. This Staphylococcus saprophyticus subsp. saprophyticus (strain ATCC 15305 / DSM 20229 / NCIMB 8711 / NCTC 7292 / S-41) protein is Inosine-5'-monophosphate dehydrogenase.